The primary structure comprises 187 residues: Large ribosomal subunit protein uL22 (187 aa).

The disordered stretch occupies residues alanine 161–glutamate 187. Over residues lysine 169–alanine 178 the composition is skewed to basic residues.

Belongs to the universal ribosomal protein uL22 family.

The polypeptide is Large ribosomal subunit protein uL22 (RpL17) (Bombyx mori (Silk moth)).